Consider the following 952-residue polypeptide: Bifunctional ent-kaurene synthase (952 aa).

The short motif at Asp-328–Asp-331 is the DXDD B-type cyclization motif element. Residues Asp-668, Glu-672, Asn-848, Asp-849, Ser-852, and Asp-856 each coordinate Mg(2+). The DEXXE A-type cyclization motif signature appears at Asp-668–Glu-672.

The protein belongs to the terpene synthase family. Mg(2+) is required as a cofactor.

The catalysed reaction is ent-copalyl diphosphate = ent-kaur-16-ene + diphosphate. It catalyses the reaction (2E,6E,10E)-geranylgeranyl diphosphate = ent-copalyl diphosphate. It participates in plant hormone biosynthesis; gibberellin biosynthesis. Its function is as follows. Bifunctional ent-kaurene synthase; part of the gene cluster that mediates the biosynthesis of gibberellins (GAs), diterpenoids that may provide a selective advantage during infection of the preferred host plant, rice. Gibberellins (GAs) are diterpenoids and are synthesized via the mevalonate pathway. Biosynthesis of the major metabolite GA3 (gibberellic acid) from geranylgeranyl diphosphate (GGPP) requires 13 steps. The GGPP produced by the geranylgeranyl diphosphate synthase GGS2 is converted to ent-kaurene via ent-copalyldiphosphate in a two-step cyclization reaction performed by the bifunctional ent-copalyl diphosphate synthase/ent-kaurene synthase enzyme (CPS/KS). Ent-Kaurene is metabolized to GAs by a series of oxidation reactions catalyzed by cytochrome P450 monooxygenases. Cytochrome P450 monooxygenase P450-4 is an ent-kaurene oxidase that catalyzes the three oxidation steps between ent-kaurene and ent-kaurenoic acid. The highly multifunctional cytochrome P450 monooxygenase P450-1 then catalyzes four steps involving oxidation at two carbon atoms, in the main pathway from ent-kaurenoic acid to GA14 via GA12-aldehyde as well as producing kaurenolides and fujenoic acids as by-products. The cytochrome P450 monooxygenase P450-2 then converts GA14 to GA4 by removal of C-20. GA4 is further converted to GA7 by the GA4 desaturase DES via 1,2-desaturation before cytochrome P450 monooxygenase P450-3, a 13-hydroxylase, hydroxylates GA7 to GA3, the final product of the GA-biosynthetic pathway. The polypeptide is Bifunctional ent-kaurene synthase (Gibberella fujikuroi (strain CBS 195.34 / IMI 58289 / NRRL A-6831) (Bakanae and foot rot disease fungus)).